The sequence spans 461 residues: tRNA modification GTPase MnmE (461 aa).

(6S)-5-formyl-5,6,7,8-tetrahydrofolate contacts are provided by R27, E89, and R128. The TrmE-type G domain occupies 224–382 (GLATAIVGRP…LEELINKLFF (159 aa)). Residue N234 coordinates K(+). GTP contacts are provided by residues 234–239 (NVGKSS), 253–259 (TDVAGTT), and 278–281 (DTAG). Position 238 (S238) interacts with Mg(2+). The K(+) site is built by T253, V255, and T258. A Mg(2+)-binding site is contributed by T259. Residue K461 participates in (6S)-5-formyl-5,6,7,8-tetrahydrofolate binding.

It belongs to the TRAFAC class TrmE-Era-EngA-EngB-Septin-like GTPase superfamily. TrmE GTPase family. In terms of assembly, homodimer. Heterotetramer of two MnmE and two MnmG subunits. Requires K(+) as cofactor.

Its subcellular location is the cytoplasm. In terms of biological role, exhibits a very high intrinsic GTPase hydrolysis rate. Involved in the addition of a carboxymethylaminomethyl (cmnm) group at the wobble position (U34) of certain tRNAs, forming tRNA-cmnm(5)s(2)U34. The sequence is that of tRNA modification GTPase MnmE from Lactobacillus helveticus (strain DPC 4571).